A 373-amino-acid chain; its full sequence is ATP phosphoribosyltransferase regulatory subunit (373 aa).

It belongs to the class-II aminoacyl-tRNA synthetase family. HisZ subfamily. In terms of assembly, heteromultimer composed of HisG and HisZ subunits.

It is found in the cytoplasm. It functions in the pathway amino-acid biosynthesis; L-histidine biosynthesis; L-histidine from 5-phospho-alpha-D-ribose 1-diphosphate: step 1/9. In terms of biological role, required for the first step of histidine biosynthesis. May allow the feedback regulation of ATP phosphoribosyltransferase activity by histidine. The sequence is that of ATP phosphoribosyltransferase regulatory subunit from Rhizobium etli (strain CIAT 652).